The sequence spans 212 residues: ER lumen protein-retaining receptor 2 (212 aa).

Topologically, residues 1–4 (MNIF) are lumenal. A helical membrane pass occupies residues 5–24 (RLTGDLSHLAAIVILLLKIW). At 25–32 (KTRSCAGI) the chain is on the cytoplasmic side. A helical membrane pass occupies residues 33-52 (SGKSQLLFALVFTTRYLDLF). The segment at 47-48 (RY) is interaction with the K-D-E-L motif on target proteins. At 53–58 (TSFISL) the chain is on the lumenal side. The helical transmembrane segment at 59–79 (YNTSMKVIYLACSYATVYLIY) threads the bilayer. The Cytoplasmic segment spans residues 80–92 (LKFKATYDGNHDT). A helical transmembrane segment spans residues 93–110 (FRVEFLVVPVGGLSFLVN). At 111-116 (HDFSPL) the chain is on the lumenal side. The chain crosses the membrane as a helical span at residues 117 to 135 (EILWTFSIYLESVAILPQL). Topologically, residues 136–149 (FMISKTGEAETITT) are cytoplasmic. The helical transmembrane segment at 150 to 168 (HYLFFLGLYRALYLVNWIW) threads the bilayer. The segment at 159 to 169 (RALYLVNWIWR) is interaction with the K-D-E-L motif on target proteins. The Lumenal segment spans residues 169–178 (RFYFEGFFDL). Residues 179–199 (IAVVAGVVQTILYCDFFYLYI) traverse the membrane as a helical segment. Residues 200–212 (TKVLKGKKLSLPA) are Cytoplasmic-facing. Residues 204–207 (KGKK) are important for recycling of cargo proteins with the sequence motif K-D-E-L from the Golgi to the endoplasmic reticulum.

It belongs to the ERD2 family.

The protein resides in the endoplasmic reticulum membrane. Its subcellular location is the golgi apparatus membrane. The protein localises to the cytoplasmic vesicle. It is found in the COPI-coated vesicle membrane. Membrane receptor that binds the K-D-E-L sequence motif in the C-terminal part of endoplasmic reticulum resident proteins and maintains their localization in that compartment by participating to their vesicle-mediated recycling back from the Golgi. Binding is pH dependent, and is optimal at pH 5-5.4. The sequence is that of ER lumen protein-retaining receptor 2 (KDELR2) from Homo sapiens (Human).